A 113-amino-acid polypeptide reads, in one-letter code: Endoribonuclease SymE (113 aa).

Residues 29–74 form the SpoVT-AbrB domain; the sequence is SRYPDYSRIPAITLKGQWLEAAGFATGTVVDVKVMEGCIVLTAQPP.

Belongs to the SymE family.

The protein resides in the cytoplasm. In terms of biological role, involved in the degradation and recycling of damaged RNA. It is itself a target for degradation by the ATP-dependent protease Lon. The protein is Endoribonuclease SymE of Escherichia coli (strain 55989 / EAEC).